Here is a 223-residue protein sequence, read N- to C-terminus: Transmembrane protein 235 (223 aa).

An N-terminal signal peptide occupies residues 1-28 (MARLGALLLAAALGALLSFALLAAAVAS). The N-linked (GlcNAc...) asparagine glycan is linked to Asn41. The next 3 helical transmembrane spans lie at 96–116 (VIVVLPLSLVLLVCGWICGLL), 126–146 (LLFTGCYFLLGSVLTLAGVSI), and 176–196 (WSMALAWGSCALEAFSGTLLL).

Belongs to the PMP-22/EMP/MP20 family. In terms of processing, N-glycosylated.

The protein localises to the membrane. It localises to the endoplasmic reticulum. The sequence is that of Transmembrane protein 235 (TMEM235) from Homo sapiens (Human).